The primary structure comprises 385 residues: tRNA N6-adenosine threonylcarbamoyltransferase (385 aa).

A divalent metal cation-binding residues include His-140, His-144, and Tyr-161. Substrate contacts are provided by residues 161-165 (YVSGG), Asp-193, Gly-208, Glu-212, and Asn-314. Asp-343 serves as a coordination point for a divalent metal cation.

This sequence belongs to the KAE1 / TsaD family. As to quaternary structure, component of the EKC/KEOPS complex composed of at least BUD32, CGI121, GON7, KAE1 and PCC1; the whole complex dimerizes. Requires a divalent metal cation as cofactor.

It localises to the cytoplasm. The protein resides in the nucleus. The enzyme catalyses L-threonylcarbamoyladenylate + adenosine(37) in tRNA = N(6)-L-threonylcarbamoyladenosine(37) in tRNA + AMP + H(+). Its function is as follows. Component of the EKC/KEOPS complex that is required for the formation of a threonylcarbamoyl group on adenosine at position 37 (t(6)A37) in tRNAs that read codons beginning with adenine. The complex is probably involved in the transfer of the threonylcarbamoyl moiety of threonylcarbamoyl-AMP (TC-AMP) to the N6 group of A37. KAE1 likely plays a direct catalytic role in this reaction, but requires other protein(s) of the complex to fulfill this activity. The EKC/KEOPS complex also promotes both telomere uncapping and telomere elongation. The complex is required for efficient recruitment of transcriptional coactivators. In Eremothecium gossypii (strain ATCC 10895 / CBS 109.51 / FGSC 9923 / NRRL Y-1056) (Yeast), this protein is tRNA N6-adenosine threonylcarbamoyltransferase.